We begin with the raw amino-acid sequence, 310 residues long: HTH-type transcriptional activator TtdR (310 aa).

Positions 6–63 constitute an HTH lysR-type domain; that stretch reads PLAKDLQVLVEIVHSGSFSAAAATLGQTPAFVTKRIQILENTLATTLLNRSARGVALT. The segment at residues 23–42 is a DNA-binding region (H-T-H motif); that stretch reads FSAAAATLGQTPAFVTKRIQ.

The protein belongs to the LysR transcriptional regulatory family.

Positive regulator required for L-tartrate-dependent anaerobic growth on glycerol. Induces expression of the ttdA-ttdB-ygjE operon. This chain is HTH-type transcriptional activator TtdR (ttdR), found in Escherichia coli O6:K15:H31 (strain 536 / UPEC).